Here is a 316-residue protein sequence, read N- to C-terminus: Probable cell division protein WhiA (316 aa).

The H-T-H motif DNA-binding region spans 275 to 309; the sequence is TLKELGEMVASGKISKSGINHRLRKLDEIAEQLRT.

This sequence belongs to the WhiA family.

The protein localises to the cytoplasm. The protein resides in the nucleoid. Its function is as follows. Involved in cell division and chromosome segregation. May influence the activity of FtsZ. Binds DNA, but does not seem to function as a transcription factor. In Bacillus subtilis (strain 168), this protein is Probable cell division protein WhiA.